The primary structure comprises 292 residues: ATP synthase gamma chain (292 aa).

Belongs to the ATPase gamma chain family. In terms of assembly, F-type ATPases have 2 components, CF(1) - the catalytic core - and CF(0) - the membrane proton channel. CF(1) has five subunits: alpha(3), beta(3), gamma(1), delta(1), epsilon(1). CF(0) has three main subunits: a, b and c.

Its subcellular location is the cell inner membrane. Functionally, produces ATP from ADP in the presence of a proton gradient across the membrane. The gamma chain is believed to be important in regulating ATPase activity and the flow of protons through the CF(0) complex. In Hydrogenobaculum sp. (strain Y04AAS1), this protein is ATP synthase gamma chain.